A 363-amino-acid chain; its full sequence is MTDKTYKIAVLPGDGIGPEVMAQAHKVLDAIEKKHAIHFEREEHDVGGIAIDNHGCPLPQSTVTACEESDAVLFGSVGGPKWEHLPPNDQPERGALLPLRKHFQLFCNLRPAQIHSGLEAFSPLRADISGRGFDIVVVRELTGGIYFGQPKGREGEGANEKAYDTEIYHRFEIERIAKIAFESARLRRKKVCSIDKANVLQSSILWREVVEEIAKDYPDVELSHMYIDNATMQLIKDPAQFDVMLCSNIFGDIISDECAMITGSMGMLPSASLNESKFGLYEPAGGSAPDIAGKNIANPVAQILSAALMLRYSLGEEAAAQDIENAVSQALAAGELTADLAGDKPALSTAEMGDKIAQYILNS.

79 to 92 lines the NAD(+) pocket; it reads GPKWEHLPPNDQPE. Arg-100, Arg-110, Arg-139, and Asp-228 together coordinate substrate. 3 residues coordinate Mg(2+): Asp-228, Asp-252, and Asp-256. Residue 286–298 participates in NAD(+) binding; sequence GSAPDIAGKNIAN.

This sequence belongs to the isocitrate and isopropylmalate dehydrogenases family. LeuB type 1 subfamily. As to quaternary structure, homodimer. Requires Mg(2+) as cofactor. Mn(2+) is required as a cofactor.

The protein localises to the cytoplasm. It catalyses the reaction (2R,3S)-3-isopropylmalate + NAD(+) = 4-methyl-2-oxopentanoate + CO2 + NADH. It participates in amino-acid biosynthesis; L-leucine biosynthesis; L-leucine from 3-methyl-2-oxobutanoate: step 3/4. Catalyzes the oxidation of 3-carboxy-2-hydroxy-4-methylpentanoate (3-isopropylmalate) to 3-carboxy-4-methyl-2-oxopentanoate. The product decarboxylates to 4-methyl-2 oxopentanoate. This chain is 3-isopropylmalate dehydrogenase, found in Vibrio vulnificus (strain YJ016).